We begin with the raw amino-acid sequence, 157 residues long: SsrA-binding protein (157 aa).

The tract at residues 134 to 157 (HDKRESEKKRDWGREKGRLLRARG) is disordered. Over residues 135-151 (DKRESEKKRDWGREKGR) the composition is skewed to basic and acidic residues.

Belongs to the SmpB family.

It localises to the cytoplasm. In terms of biological role, required for rescue of stalled ribosomes mediated by trans-translation. Binds to transfer-messenger RNA (tmRNA), required for stable association of tmRNA with ribosomes. tmRNA and SmpB together mimic tRNA shape, replacing the anticodon stem-loop with SmpB. tmRNA is encoded by the ssrA gene; the 2 termini fold to resemble tRNA(Ala) and it encodes a 'tag peptide', a short internal open reading frame. During trans-translation Ala-aminoacylated tmRNA acts like a tRNA, entering the A-site of stalled ribosomes, displacing the stalled mRNA. The ribosome then switches to translate the ORF on the tmRNA; the nascent peptide is terminated with the 'tag peptide' encoded by the tmRNA and targeted for degradation. The ribosome is freed to recommence translation, which seems to be the essential function of trans-translation. This is SsrA-binding protein from Nitrobacter hamburgensis (strain DSM 10229 / NCIMB 13809 / X14).